Here is a 243-residue protein sequence, read N- to C-terminus: Ubiquinone biosynthesis O-methyltransferase (243 aa).

S-adenosyl-L-methionine contacts are provided by R44, G64, D85, and M129.

This sequence belongs to the methyltransferase superfamily. UbiG/COQ3 family.

It catalyses the reaction a 3-demethylubiquinol + S-adenosyl-L-methionine = a ubiquinol + S-adenosyl-L-homocysteine + H(+). The enzyme catalyses a 3-(all-trans-polyprenyl)benzene-1,2-diol + S-adenosyl-L-methionine = a 2-methoxy-6-(all-trans-polyprenyl)phenol + S-adenosyl-L-homocysteine + H(+). It participates in cofactor biosynthesis; ubiquinone biosynthesis. In terms of biological role, O-methyltransferase that catalyzes the 2 O-methylation steps in the ubiquinone biosynthetic pathway. The polypeptide is Ubiquinone biosynthesis O-methyltransferase (Cronobacter sakazakii (strain ATCC BAA-894) (Enterobacter sakazakii)).